Here is a 1829-residue protein sequence, read N- to C-terminus: Protein let-418 (1829 aa).

2 stretches are compositionally biased toward acidic residues: residues 1-17 (MSTEEDPSLVDAEESME) and 25-39 (ATEETEEEEEQEQGD). Disordered regions lie at residues 1–81 (MSTE…YNST) and 147–198 (MAAQ…SDQE). A compositionally biased stretch (basic residues) spans 48–63 (RSSRKKGGKGGKKGSK). 2 PHD-type zinc fingers span residues 256–303 (NDYC…CIEH) and 317–365 (DEFC…CETV). 2 Chromo domains span residues 401–458 (LKPP…PPEF) and 489–550 (MQIH…NEDI). The Helicase ATP-binding domain occupies 614 to 798 (RHCWSNGTDA…FHLLNFLSKE (185 aa)). Residue 627–634 (DEMGLGKT) coordinates ATP. Positions 749–752 (DEAH) match the DEAH box motif. Residues 930-1093 (LLQKMLRKLK…GKTMSKTELD (164 aa)) form the Helicase C-terminal domain. 4 disordered regions span residues 1168-1198 (ASYQTKETEGQEEEEEEETEVIKEDEKEPDP), 1234-1289 (SENM…MPPL), 1415-1495 (AANG…ARPS), and 1745-1829 (NGER…PMET). Residues 1177-1186 (GQEEEEEEET) show a composition bias toward acidic residues. 2 stretches are compositionally biased toward polar residues: residues 1234–1247 (SENMGTDWSKQNQT) and 1418–1427 (GSAQGSSRST). Basic and acidic residues predominate over residues 1429–1444 (KPKEEPKEEPMEKEDA). Polar residues predominate over residues 1446 to 1455 (ETVNGATSEP). Basic and acidic residues predominate over residues 1474 to 1490 (DEAKEPKEEPIETEKPR). Residues 1749–1773 (MEEDEPVEAEEEEGVKQEPDDETQD) show a composition bias toward acidic residues. Residues 1792 to 1811 (DVPSTSAAAAVSSETAADAE) show a composition bias toward low complexity. A compositionally biased stretch (acidic residues) spans 1819–1829 (APTDEPEPMET).

As to quaternary structure, component of the MEC (MEP-1-containing complex) complex that contains let-418, mep-1 and hda-1. Component of a NURD complex that contains let-418, hda-1, lin-40 and lin-53. Interacts with lin-1. Interacts with pie-1. Interacts with akir-1. Expressed in embryos and larva.

The protein resides in the nucleus. In terms of biological role, part of a NuRD (Nucleosome Remodeling and Deacetylase) complex which is implicated in the synMuv B pathway that negatively regulates specification of vulval cell fate. This negative regulation is thought to be mediated via interaction with the promoter of lin-39, a key regulator in vulva development, and is dependent on the presence lin-1. Contributes to negative regulation of lag-2 which is expressed in the gut during larval development. Has a broad role in development. In association with akir-1, plays a role in regulating the transcription of antimicrobial peptide genes in response to fungal infection. This chain is Protein let-418, found in Caenorhabditis elegans.